The primary structure comprises 322 residues: Adenine deaminase (322 aa).

3 residues coordinate Zn(2+): H11, H13, and H189. The active-site Proton donor is the E192. A Zn(2+)-binding site is contributed by D270. D271 contacts substrate.

The protein belongs to the metallo-dependent hydrolases superfamily. Adenosine and AMP deaminases family. Adenine deaminase type 2 subfamily. Zn(2+) serves as cofactor.

The catalysed reaction is adenine + H2O + H(+) = hypoxanthine + NH4(+). Catalyzes the hydrolytic deamination of adenine to hypoxanthine. Plays an important role in the purine salvage pathway and in nitrogen catabolism. The chain is Adenine deaminase from Rhizobium leguminosarum bv. trifolii (strain WSM2304).